The chain runs to 315 residues: Protein rlx (315 aa).

The tract at residues 263–315 (TEQLKQRRVERAQETKQAHSKISSRDTRESENQRERAKGNNIRIERGDEGLSR) is disordered.

This protein is probably required for relaxation complex formation and plasmid mobilization by conjugative plasmids. This is Protein rlx (rlx) from Staphylococcus aureus.